Reading from the N-terminus, the 141-residue chain is NADH-quinone oxidoreductase subunit A (141 aa).

The next 3 helical transmembrane spans lie at 24–44, 77–97, and 106–126; these read LLAL…LLLA, VPFY…AFIA, and LGWA…VALI.

Belongs to the complex I subunit 3 family. As to quaternary structure, NDH-1 is composed of 14 different subunits. Subunits NuoA, H, J, K, L, M, N constitute the membrane sector of the complex.

Its subcellular location is the cell inner membrane. It catalyses the reaction a quinone + NADH + 5 H(+)(in) = a quinol + NAD(+) + 4 H(+)(out). Its function is as follows. NDH-1 shuttles electrons from NADH, via FMN and iron-sulfur (Fe-S) centers, to quinones in the respiratory chain. The immediate electron acceptor for the enzyme in this species is believed to be ubiquinone. Couples the redox reaction to proton translocation (for every two electrons transferred, four hydrogen ions are translocated across the cytoplasmic membrane), and thus conserves the redox energy in a proton gradient. The sequence is that of NADH-quinone oxidoreductase subunit A from Syntrophotalea carbinolica (strain DSM 2380 / NBRC 103641 / GraBd1) (Pelobacter carbinolicus).